The following is a 1355-amino-acid chain: Phosphoribosylformylglycinamidine synthase (1355 aa).

Residues 326–337 (GAETGTGGRLRD) and 406–408 (IGF) contribute to the ATP site. Residues Glu-743, Asn-747, and Asp-911 each coordinate Mg(2+). An ATP-binding site is contributed by Ser-913. Positions 1087–1325 (KVAVIREEGS…LSWQWPFMPE (239 aa)) constitute a Glutamine amidotransferase type-1 domain. Cys-1182 (nucleophile) is an active-site residue. Catalysis depends on residues His-1310 and Glu-1312.

In the N-terminal section; belongs to the FGAMS family.

Its subcellular location is the cytoplasm. It carries out the reaction N(2)-formyl-N(1)-(5-phospho-beta-D-ribosyl)glycinamide + L-glutamine + ATP + H2O = 2-formamido-N(1)-(5-O-phospho-beta-D-ribosyl)acetamidine + L-glutamate + ADP + phosphate + H(+). It functions in the pathway purine metabolism; IMP biosynthesis via de novo pathway; 5-amino-1-(5-phospho-D-ribosyl)imidazole from N(2)-formyl-N(1)-(5-phospho-D-ribosyl)glycinamide: step 1/2. Phosphoribosylformylglycinamidine synthase involved in the purines biosynthetic pathway. Catalyzes the ATP-dependent conversion of formylglycinamide ribonucleotide (FGAR) and glutamine to yield formylglycinamidine ribonucleotide (FGAM) and glutamate. This chain is Phosphoribosylformylglycinamidine synthase (purL), found in Dictyostelium discoideum (Social amoeba).